The primary structure comprises 188 residues: Large ribosomal subunit protein eL18 (188 aa).

The segment at 147–188 (EANKHFGPAPGVPHSHTKAHVRSKGRQFERARGRRTSKGYKK) is disordered. 2 stretches are compositionally biased toward basic residues: residues 161–171 (SHTKAHVRSKG) and 178–188 (RGRRTSKGYKK).

This sequence belongs to the eukaryotic ribosomal protein eL18 family.

It is found in the cytoplasm. This is Large ribosomal subunit protein eL18 (RpL18) from Diaphorina citri (Asian citrus psyllid).